The following is an 80-amino-acid chain: Small ribosomal subunit protein uS17 (80 aa).

Belongs to the universal ribosomal protein uS17 family. As to quaternary structure, part of the 30S ribosomal subunit.

In terms of biological role, one of the primary rRNA binding proteins, it binds specifically to the 5'-end of 16S ribosomal RNA. The polypeptide is Small ribosomal subunit protein uS17 (Beijerinckia indica subsp. indica (strain ATCC 9039 / DSM 1715 / NCIMB 8712)).